Consider the following 136-residue polypeptide: Type II nicking enzyme V.XorIIP (136 aa).

This sequence belongs to the Vsr family.

Its function is as follows. May nick XorII sequences that contain T/G mispairs resulting from m5C-deamination. If unrepaired, these mismatches can lead to C-to-T transition mutations. The very short patch (VSP) repair process counteracts the mutagenic process by repairing the mismatches in favor of the G-containing strand. This enzyme is an endonuclease that nicks double-stranded DNA within the sequence CGATCG (C-methylation site unknown) next to the thymidine residue that is mismatched to 2'-deoxyguanosine. The incision is mismatch-dependent and strand-specific. The polypeptide is Type II nicking enzyme V.XorIIP (Xanthomonas oryzae pv. oryzae (strain KACC10331 / KXO85)).